The primary structure comprises 619 residues: Dihydroxy-acid dehydratase (619 aa).

D81 is a Mg(2+) binding site. C122 provides a ligand contact to [2Fe-2S] cluster. Mg(2+)-binding residues include D123 and K124. The residue at position 124 (K124) is an N6-carboxylysine. Residue C201 participates in [2Fe-2S] cluster binding. E496 contributes to the Mg(2+) binding site. S522 functions as the Proton acceptor in the catalytic mechanism.

The protein belongs to the IlvD/Edd family. In terms of assembly, homodimer. It depends on [2Fe-2S] cluster as a cofactor. Mg(2+) serves as cofactor.

The enzyme catalyses (2R)-2,3-dihydroxy-3-methylbutanoate = 3-methyl-2-oxobutanoate + H2O. It carries out the reaction (2R,3R)-2,3-dihydroxy-3-methylpentanoate = (S)-3-methyl-2-oxopentanoate + H2O. It functions in the pathway amino-acid biosynthesis; L-isoleucine biosynthesis; L-isoleucine from 2-oxobutanoate: step 3/4. It participates in amino-acid biosynthesis; L-valine biosynthesis; L-valine from pyruvate: step 3/4. In terms of biological role, functions in the biosynthesis of branched-chain amino acids. Catalyzes the dehydration of (2R,3R)-2,3-dihydroxy-3-methylpentanoate (2,3-dihydroxy-3-methylvalerate) into 2-oxo-3-methylpentanoate (2-oxo-3-methylvalerate) and of (2R)-2,3-dihydroxy-3-methylbutanoate (2,3-dihydroxyisovalerate) into 2-oxo-3-methylbutanoate (2-oxoisovalerate), the penultimate precursor to L-isoleucine and L-valine, respectively. The protein is Dihydroxy-acid dehydratase of Burkholderia vietnamiensis (strain G4 / LMG 22486) (Burkholderia cepacia (strain R1808)).